Here is a 592-residue protein sequence, read N- to C-terminus: Aspartate--tRNA ligase (592 aa).

E173 lines the L-aspartate pocket. The segment at 197–200 (QLFK) is aspartate. Position 219 (R219) interacts with L-aspartate. ATP contacts are provided by residues 219–221 (RDE) and Q228. An L-aspartate-binding site is contributed by H448. Position 482 (E482) interacts with ATP. R489 is an L-aspartate binding site. 534-537 (GLDR) contacts ATP.

It belongs to the class-II aminoacyl-tRNA synthetase family. Type 1 subfamily. Homodimer.

It is found in the cytoplasm. It carries out the reaction tRNA(Asp) + L-aspartate + ATP = L-aspartyl-tRNA(Asp) + AMP + diphosphate. In terms of biological role, catalyzes the attachment of L-aspartate to tRNA(Asp) in a two-step reaction: L-aspartate is first activated by ATP to form Asp-AMP and then transferred to the acceptor end of tRNA(Asp). The protein is Aspartate--tRNA ligase of Shewanella baltica (strain OS223).